The primary structure comprises 203 residues: Large ribosomal subunit protein bL25 (203 aa).

This sequence belongs to the bacterial ribosomal protein bL25 family. CTC subfamily. As to quaternary structure, part of the 50S ribosomal subunit; part of the 5S rRNA/L5/L18/L25 subcomplex. Contacts the 5S rRNA. Binds to the 5S rRNA independently of L5 and L18.

In terms of biological role, this is one of the proteins that binds to the 5S RNA in the ribosome where it forms part of the central protuberance. The protein is Large ribosomal subunit protein bL25 of Rickettsia africae (strain ESF-5).